Consider the following 91-residue polypeptide: MSVKIRLKRMGSKKRPFYRVVVADSRSPRDGRFIEQVGTYNPVTEPAQVTLKEESILNWLNNGAQPSDTVKTLLSNAGIMKQYHEAKYTKK.

The protein belongs to the bacterial ribosomal protein bS16 family.

This is Small ribosomal subunit protein bS16 from Levilactobacillus brevis (strain ATCC 367 / BCRC 12310 / CIP 105137 / JCM 1170 / LMG 11437 / NCIMB 947 / NCTC 947) (Lactobacillus brevis).